Consider the following 95-residue polypeptide: Aspartyl/glutamyl-tRNA(Asn/Gln) amidotransferase subunit C (95 aa).

The protein belongs to the GatC family. Heterotrimer of A, B and C subunits.

It carries out the reaction L-glutamyl-tRNA(Gln) + L-glutamine + ATP + H2O = L-glutaminyl-tRNA(Gln) + L-glutamate + ADP + phosphate + H(+). The enzyme catalyses L-aspartyl-tRNA(Asn) + L-glutamine + ATP + H2O = L-asparaginyl-tRNA(Asn) + L-glutamate + ADP + phosphate + 2 H(+). Allows the formation of correctly charged Asn-tRNA(Asn) or Gln-tRNA(Gln) through the transamidation of misacylated Asp-tRNA(Asn) or Glu-tRNA(Gln) in organisms which lack either or both of asparaginyl-tRNA or glutaminyl-tRNA synthetases. The reaction takes place in the presence of glutamine and ATP through an activated phospho-Asp-tRNA(Asn) or phospho-Glu-tRNA(Gln). This is Aspartyl/glutamyl-tRNA(Asn/Gln) amidotransferase subunit C from Nitrosomonas europaea (strain ATCC 19718 / CIP 103999 / KCTC 2705 / NBRC 14298).